A 213-amino-acid chain; its full sequence is Orotate phosphoribosyltransferase (213 aa).

K26 contributes to the 5-phospho-alpha-D-ribose 1-diphosphate binding site. 34–35 (FF) contributes to the orotate binding site. Residues 72 to 73 (YK), R99, K100, K103, H105, and 124 to 132 (DDVITAGTA) each bind 5-phospho-alpha-D-ribose 1-diphosphate. Positions 128 and 156 each coordinate orotate.

Belongs to the purine/pyrimidine phosphoribosyltransferase family. PyrE subfamily. Homodimer. It depends on Mg(2+) as a cofactor.

The enzyme catalyses orotidine 5'-phosphate + diphosphate = orotate + 5-phospho-alpha-D-ribose 1-diphosphate. It functions in the pathway pyrimidine metabolism; UMP biosynthesis via de novo pathway; UMP from orotate: step 1/2. In terms of biological role, catalyzes the transfer of a ribosyl phosphate group from 5-phosphoribose 1-diphosphate to orotate, leading to the formation of orotidine monophosphate (OMP). The sequence is that of Orotate phosphoribosyltransferase from Photorhabdus laumondii subsp. laumondii (strain DSM 15139 / CIP 105565 / TT01) (Photorhabdus luminescens subsp. laumondii).